The following is a 142-amino-acid chain: Calmodulin-alpha (142 aa).

An N-acetylalanine modification is found at A2. 4 consecutive EF-hand domains span residues E8 to N43, P44 to D79, D81 to K116, and L117 to F142. The Ca(2+) site is built by D21, D23, D25, T27, E32, D57, D59, N61, T63, E68, D94, D96, N98, Y100, and E105. The residue at position 116 (K116) is an N6,N6,N6-trimethyllysine. The Ca(2+) site is built by D130, D132, D134, Q136, and E141.

The protein belongs to the calmodulin family.

Functionally, calmodulin mediates the control of a large number of enzymes, ion channels and other proteins by Ca(2+). Among the enzymes to be stimulated by the calmodulin-Ca(2+) complex are a number of protein kinases and phosphatases. The polypeptide is Calmodulin-alpha (Arbacia punctulata (Punctuate sea urchin)).